The sequence spans 630 residues: 1-deoxy-D-xylulose-5-phosphate synthase (630 aa).

Residues histidine 72 and 113–115 (GHS) each bind thiamine diphosphate. Aspartate 144 is a binding site for Mg(2+). Thiamine diphosphate contacts are provided by residues 145–146 (GA), asparagine 173, tyrosine 284, and glutamate 367. Asparagine 173 contributes to the Mg(2+) binding site.

Belongs to the transketolase family. DXPS subfamily. In terms of assembly, homodimer. It depends on Mg(2+) as a cofactor. The cofactor is thiamine diphosphate.

It catalyses the reaction D-glyceraldehyde 3-phosphate + pyruvate + H(+) = 1-deoxy-D-xylulose 5-phosphate + CO2. It participates in metabolic intermediate biosynthesis; 1-deoxy-D-xylulose 5-phosphate biosynthesis; 1-deoxy-D-xylulose 5-phosphate from D-glyceraldehyde 3-phosphate and pyruvate: step 1/1. Its function is as follows. Catalyzes the acyloin condensation reaction between C atoms 2 and 3 of pyruvate and glyceraldehyde 3-phosphate to yield 1-deoxy-D-xylulose-5-phosphate (DXP). The chain is 1-deoxy-D-xylulose-5-phosphate synthase from Geobacillus sp. (strain WCH70).